We begin with the raw amino-acid sequence, 482 residues long: tRNA sulfurtransferase (482 aa).

In terms of domain architecture, THUMP spans 61 to 165; that stretch reads PAIRDALTRI…NDRLLLVKGR (105 aa). Residues 183-184, Lys265, Gly287, and Gln296 contribute to the ATP site; that span reads LI. A disulfide bond links Cys344 and Cys456. The Rhodanese domain occupies 404-482; the sequence is FGANDAILDI…GFSNVKVYRP (79 aa). Cys456 functions as the Cysteine persulfide intermediate in the catalytic mechanism.

The protein belongs to the ThiI family.

Its subcellular location is the cytoplasm. It catalyses the reaction [ThiI sulfur-carrier protein]-S-sulfanyl-L-cysteine + a uridine in tRNA + 2 reduced [2Fe-2S]-[ferredoxin] + ATP + H(+) = [ThiI sulfur-carrier protein]-L-cysteine + a 4-thiouridine in tRNA + 2 oxidized [2Fe-2S]-[ferredoxin] + AMP + diphosphate. It carries out the reaction [ThiS sulfur-carrier protein]-C-terminal Gly-Gly-AMP + S-sulfanyl-L-cysteinyl-[cysteine desulfurase] + AH2 = [ThiS sulfur-carrier protein]-C-terminal-Gly-aminoethanethioate + L-cysteinyl-[cysteine desulfurase] + A + AMP + 2 H(+). Its pathway is cofactor biosynthesis; thiamine diphosphate biosynthesis. Its function is as follows. Catalyzes the ATP-dependent transfer of a sulfur to tRNA to produce 4-thiouridine in position 8 of tRNAs, which functions as a near-UV photosensor. Also catalyzes the transfer of sulfur to the sulfur carrier protein ThiS, forming ThiS-thiocarboxylate. This is a step in the synthesis of thiazole, in the thiamine biosynthesis pathway. The sulfur is donated as persulfide by IscS. The sequence is that of tRNA sulfurtransferase from Klebsiella pneumoniae (strain 342).